The chain runs to 130 residues: Small ribosomal subunit protein uS9 (130 aa).

It belongs to the universal ribosomal protein uS9 family.

The protein is Small ribosomal subunit protein uS9 of Methylibium petroleiphilum (strain ATCC BAA-1232 / LMG 22953 / PM1).